Consider the following 263-residue polypeptide: Thiazole synthase (263 aa).

The Schiff-base intermediate with DXP role is filled by Lys102. Residues Gly164, 190 to 191 (AG), and 212 to 213 (NT) contribute to the 1-deoxy-D-xylulose 5-phosphate site.

Belongs to the ThiG family. As to quaternary structure, homotetramer. Forms heterodimers with either ThiH or ThiS.

The protein resides in the cytoplasm. It carries out the reaction [ThiS sulfur-carrier protein]-C-terminal-Gly-aminoethanethioate + 2-iminoacetate + 1-deoxy-D-xylulose 5-phosphate = [ThiS sulfur-carrier protein]-C-terminal Gly-Gly + 2-[(2R,5Z)-2-carboxy-4-methylthiazol-5(2H)-ylidene]ethyl phosphate + 2 H2O + H(+). Its pathway is cofactor biosynthesis; thiamine diphosphate biosynthesis. Its function is as follows. Catalyzes the rearrangement of 1-deoxy-D-xylulose 5-phosphate (DXP) to produce the thiazole phosphate moiety of thiamine. Sulfur is provided by the thiocarboxylate moiety of the carrier protein ThiS. In vitro, sulfur can be provided by H(2)S. In Helicobacter hepaticus (strain ATCC 51449 / 3B1), this protein is Thiazole synthase.